A 475-amino-acid polypeptide reads, in one-letter code: Aspartyl/glutamyl-tRNA(Asn/Gln) amidotransferase subunit B (475 aa).

Belongs to the GatB/GatE family. GatB subfamily. In terms of assembly, heterotrimer of A, B and C subunits.

It carries out the reaction L-glutamyl-tRNA(Gln) + L-glutamine + ATP + H2O = L-glutaminyl-tRNA(Gln) + L-glutamate + ADP + phosphate + H(+). It catalyses the reaction L-aspartyl-tRNA(Asn) + L-glutamine + ATP + H2O = L-asparaginyl-tRNA(Asn) + L-glutamate + ADP + phosphate + 2 H(+). Allows the formation of correctly charged Asn-tRNA(Asn) or Gln-tRNA(Gln) through the transamidation of misacylated Asp-tRNA(Asn) or Glu-tRNA(Gln) in organisms which lack either or both of asparaginyl-tRNA or glutaminyl-tRNA synthetases. The reaction takes place in the presence of glutamine and ATP through an activated phospho-Asp-tRNA(Asn) or phospho-Glu-tRNA(Gln). The protein is Aspartyl/glutamyl-tRNA(Asn/Gln) amidotransferase subunit B of Bacillus cereus (strain ATCC 10987 / NRS 248).